A 67-amino-acid polypeptide reads, in one-letter code: Large ribosomal subunit protein uL29 (67 aa).

The protein belongs to the universal ribosomal protein uL29 family.

The chain is Large ribosomal subunit protein uL29 from Desulforudis audaxviator (strain MP104C).